A 663-amino-acid polypeptide reads, in one-letter code: UvrABC system protein B (663 aa).

The Helicase ATP-binding domain maps to 26 to 414; that stretch reads DGLESGLAKQ…DNVAEQVVRP (389 aa). 39-46 is a binding site for ATP; that stretch reads GVTGSGKT. The Beta-hairpin signature appears at 92–115; sequence YYDYYQPEAYVPASDTFIEKDASI. The region spanning 430–596 is the Helicase C-terminal domain; sequence QVDDLMSEIR…GINKSVEDIL (167 aa). Residues 624–659 enclose the UVR domain; the sequence is AKEINALEKQMYAHAQNMEFELAAKIRDEYLLLKEQ.

This sequence belongs to the UvrB family. Forms a heterotetramer with UvrA during the search for lesions. Interacts with UvrC in an incision complex.

Its subcellular location is the cytoplasm. In terms of biological role, the UvrABC repair system catalyzes the recognition and processing of DNA lesions. A damage recognition complex composed of 2 UvrA and 2 UvrB subunits scans DNA for abnormalities. Upon binding of the UvrA(2)B(2) complex to a putative damaged site, the DNA wraps around one UvrB monomer. DNA wrap is dependent on ATP binding by UvrB and probably causes local melting of the DNA helix, facilitating insertion of UvrB beta-hairpin between the DNA strands. Then UvrB probes one DNA strand for the presence of a lesion. If a lesion is found the UvrA subunits dissociate and the UvrB-DNA preincision complex is formed. This complex is subsequently bound by UvrC and the second UvrB is released. If no lesion is found, the DNA wraps around the other UvrB subunit that will check the other stand for damage. This is UvrABC system protein B from Legionella pneumophila (strain Paris).